The primary structure comprises 1581 residues: ATP-binding cassette sub-family C member 8 (1581 aa).

The Extracellular segment spans residues 1-30; the sequence is MPLAFCGSENHSAAYRVDQGVLNNGCFVDA. A disulfide bridge links C6 with C26. N10 is a glycosylation site (N-linked (GlcNAc...) asparagine). Residues 31-47 traverse the membrane as a helical segment; sequence LNVVPHVFLLFITFPIL. The Cytoplasmic segment spans residues 48–72; it reads FIGWGSQSSKVHIHHSTWLHFPGHN. The chain crosses the membrane as a helical span at residues 73 to 89; that stretch reads LRWILTFMLLFVLVCEI. Residues 90 to 106 are Extracellular-facing; it reads AEGILSDGVTESHHLHL. A helical transmembrane segment spans residues 107-123; it reads YMPAGMAFMAAVTSVVY. The Cytoplasmic segment spans residues 124–136; sequence YHNIETSNFPKLL. The chain crosses the membrane as a helical span at residues 137–153; that stretch reads IALLVYWTLAFITKTIK. The Extracellular portion of the chain corresponds to 154–169; the sequence is FVKFLDHAIGFSQLRF. The helical transmembrane segment at 170–186 threads the bilayer; that stretch reads CLTGLLVILYGMLLLVE. The Cytoplasmic portion of the chain corresponds to 187–303; the sequence is VNVIRVRRYI…AFGRRLVLSS (117 aa). The ABC transmembrane type-1 1 domain occupies 299–602; the sequence is LVLSSTFRIL…LSSVVRSTVK (304 aa). The chain crosses the membrane as a helical span at residues 304–319; the sequence is TFRILADLLGFAGPLC. The Extracellular segment spans residues 320-356; sequence IFGIVDHLGKENDVFQPKTQFLGVYFVSSQEFLANAY. Residues 357-372 traverse the membrane as a helical segment; that stretch reads VLAVLLFLALLLQRTF. Residues 373–438 are Cytoplasmic-facing; it reads LQASYYVAIE…MWFFFLCPNL (66 aa). Residues 439–454 traverse the membrane as a helical segment; sequence WAMPVQIIVGVILLYY. Residues 455-460 lie on the Extracellular side of the membrane; the sequence is ILGVSA. A helical transmembrane segment spans residues 461-473; it reads LIGAAVIILLAPV. Residues 474-541 are Cytoplasmic-facing; sequence QYFVATKLSQ…SLRAFAIYTS (68 aa). The chain crosses the membrane as a helical span at residues 542–557; sequence ISIFMNTAIPIAAVLI. The Extracellular portion of the chain corresponds to 558–576; that stretch reads TFVGHVSFFKEADFSPSVA. The chain crosses the membrane as a helical span at residues 577–592; sequence FASLSLFHILVTPLFL. At 593-1012 the chain is on the cytoplasmic side; it reads LSSVVRSTVK…YLSSAGILLL (420 aa). Residues 679-929 form the ABC transporter 1 domain; sequence VQIMGGYFTW…ECQLFEHWKT (251 aa). Residues W688, G716, S720, and S721 each contribute to the ATP site. S720 provides a ligand contact to Mg(2+). Q774 is a binding site for Mg(2+). Over residues 935-949 the composition is skewed to basic and acidic residues; the sequence is DQELEKETVTERKAT. Residues 935–987 are disordered; the sequence is DQELEKETVTERKATEPPQGLSRAMSSRDGLLQDEEEEEEEAAESEEDDNLSS. A compositionally biased stretch (acidic residues) spans 966–984; it reads LQDEEEEEEEAAESEEDDN. An ABC transmembrane type-1 2 domain is found at 1012 to 1306; the sequence is LSLLVFSQLL…MVRNLADMEL (295 aa). The helical transmembrane segment at 1013–1030 threads the bilayer; it reads SLLVFSQLLKHMVLVAID. The Extracellular segment spans residues 1031–1066; the sequence is YWLAKWTDSALTLTPAARNCSLSQECTLDQTVYAMV. N-linked (GlcNAc...) asparagine glycosylation is present at N1049. A helical transmembrane segment spans residues 1067–1083; sequence FTVLCSLGIVLCLVTSV. The Cytoplasmic portion of the chain corresponds to 1084 to 1142; it reads TVEWTGLKVAKRLHRSLLNRIILAPMRFFETTPLGSILNRFSSDCNTIDQHIPSTLECL. Residues 1143 to 1160 form a helical membrane-spanning segment; the sequence is SRSTLLCVSALAVISYVT. P1161 is a topological domain (extracellular). The helical transmembrane segment at 1162–1174 threads the bilayer; sequence VFLVALLPLAIVC. At 1175–1248 the chain is on the cytoplasmic side; sequence YFIQKYFRVA…FLTAANRWLE (74 aa). A helical transmembrane segment spans residues 1249-1264; sequence VRMEYIGACVVLIAAV. Topologically, residues 1265–1280 are extracellular; sequence TSISNSLHRELSAGLV. The helical transmembrane segment at 1281–1296 threads the bilayer; it reads GLGLTYALMVSNYLNW. Over 1297 to 1581 the chain is Cytoplasmic; that stretch reads MVRNLADMEL…VFASFVRADK (285 aa). Positions 1344 to 1578 constitute an ABC transporter 2 domain; the sequence is IQIQNLSVRY…KDSVFASFVR (235 aa). ADP is bound by residues T1380, G1381, G1383, K1384, S1385, and S1386. S1482 contacts ATP.

Belongs to the ABC transporter superfamily. ABCC family. Conjugate transporter (TC 3.A.1.208) subfamily. In terms of assembly, forms an heterooctamer with KCNJ11; four ABCC8/SUR1 molecules interact with one KCNJ11 homotetramer.

Its subcellular location is the cell membrane. Its activity is regulated as follows. KATP channels are regulated by cytoplasmic ATP/ADP ratios; ATP inhibits the channel by closing the pore, while ADP activates the channel. Activated by phosphatidylinositol 4,5-biphosphate (PtdIns(4,5)P2). In terms of biological role, regulator subunit of pancreatic ATP-sensitive potassium channel (KATP), playing a major role in the regulation of insulin release. In pancreatic cells, it forms KATP channels with KCNJ11; KCNJ11 forms the channel pore while ABCC8 is required for activation and regulation. The protein is ATP-binding cassette sub-family C member 8 (ABCC8) of Homo sapiens (Human).